The following is a 189-amino-acid chain: Probable nicotinate-nucleotide adenylyltransferase (189 aa).

Belongs to the NadD family.

The enzyme catalyses nicotinate beta-D-ribonucleotide + ATP + H(+) = deamido-NAD(+) + diphosphate. The protein operates within cofactor biosynthesis; NAD(+) biosynthesis; deamido-NAD(+) from nicotinate D-ribonucleotide: step 1/1. Catalyzes the reversible adenylation of nicotinate mononucleotide (NaMN) to nicotinic acid adenine dinucleotide (NaAD). This chain is Probable nicotinate-nucleotide adenylyltransferase, found in Bacillus cereus (strain AH820).